The chain runs to 543 residues: MLKSLCFVIRPAIVSRPQFRLPTIARLSLRQFQNQPQSVGFFTMAPLETRALALSPSATICPPSRIGTTELDRSAFDLDVQILSAVVEPGMIGKLRSHPSLKDLVLDLPKTKPIVECPAGLAPVAARDVKGLKLLRFHLSKESELPEEAKEVLKGAKALVKEVVRLGYDNWNASEILGACLPTTKSEDIPSSFTTTGHIGHMNLREEWLPFRYLIGQVVLDKNPGLRTIVNKLDTIHAQFRYFDMEVIAGDNDYIATVNESGCSFTFNFSNVYWNSRLHHEHERLISLFPPGCVIADVMAGVGPFAIPAAKKGCYVLGNDLNPESVKWMRENRLRNKVEPTLRVSEIDGFEFIRIAPLEVWTRPFDPAPPPKVSNRQRDREAKEARRKREQAKAAGQPVTETAPMSIPSQEVAIKPHPPQPPKLISHFIMNLPDSAITFLPSYVSCYTPLLAERSFIDEYGGEEEAKRKVEMPMVHCYCFTKEIEIGKAEIDILQRASTNLSFNLTPQVENYNLHHVRSVAPNKDMYCLSFRLPREVAFRHNG.

Residues 1 to 59 (MLKSLCFVIRPAIVSRPQFRLPTIARLSLRQFQNQPQSVGFFTMAPLETRALALSPSAT) constitute a mitochondrion transit peptide. Residues His-282, 320–321 (DL), and 348–349 (DG) each bind S-adenosyl-L-methionine. The disordered stretch occupies residues 366-405 (DPAPPPKVSNRQRDREAKEARRKREQAKAAGQPVTETAPM). S-adenosyl-L-methionine is bound at residue Asn-431.

This sequence belongs to the class I-like SAM-binding methyltransferase superfamily. TRM5/TYW2 family. In terms of assembly, monomer.

The protein localises to the mitochondrion matrix. The protein resides in the nucleus. Its subcellular location is the cytoplasm. The enzyme catalyses guanosine(37) in tRNA + S-adenosyl-L-methionine = N(1)-methylguanosine(37) in tRNA + S-adenosyl-L-homocysteine + H(+). Specifically methylates the N1 position of guanosine-37 in various cytoplasmic and mitochondrial tRNAs. Methylation is not dependent on the nature of the nucleoside 5' of the target nucleoside. This is the first step in the biosynthesis of wybutosine (yW), a modified base adjacent to the anticodon of tRNAs and required for accurate decoding. The sequence is that of tRNA (guanine(37)-N(1))-methyltransferase from Cryptococcus neoformans var. neoformans serotype D (strain JEC21 / ATCC MYA-565) (Filobasidiella neoformans).